Reading from the N-terminus, the 197-residue chain is Ribosome maturation factor RimP (197 aa).

This sequence belongs to the RimP family.

The protein resides in the cytoplasm. Its function is as follows. Required for maturation of 30S ribosomal subunits. In Acidovorax ebreus (strain TPSY) (Diaphorobacter sp. (strain TPSY)), this protein is Ribosome maturation factor RimP.